Reading from the N-terminus, the 89-residue chain is Small ribosomal subunit protein bS20 (89 aa).

It belongs to the bacterial ribosomal protein bS20 family.

Functionally, binds directly to 16S ribosomal RNA. In Stenotrophomonas maltophilia (strain R551-3), this protein is Small ribosomal subunit protein bS20.